The following is a 220-amino-acid chain: MRLRNKPWAKEKIAAYPQYVIPNPEEHKGRWNELFGNDHPIHIEIGTGKGKFITEMAKANPNINYIGIELYPSVLVSALDKLIENELPNLRLLNVNAKDLTNFFAEGEIERIYLNFSDPWPKKRHEKRRLTYRAFLELYEKVLVDEGEIHFKTDNQAFFEYSLVSFSQYGLVLTYVSLDLHNSDFEGNVMTEYEEKFSAKGNRIYRCEVKYPPKHQKAGL.

Residues Glu44, Glu69, Asn96, and Asp118 each contribute to the S-adenosyl-L-methionine site. Asp118 is a catalytic residue. A substrate-binding site is contributed by Lys122. The interaction with RNA stretch occupies residues Arg124–Arg129. Residues Asp154 and Thr191–Glu194 each bind substrate.

This sequence belongs to the class I-like SAM-binding methyltransferase superfamily. TrmB family.

It carries out the reaction guanosine(46) in tRNA + S-adenosyl-L-methionine = N(7)-methylguanosine(46) in tRNA + S-adenosyl-L-homocysteine. The protein operates within tRNA modification; N(7)-methylguanine-tRNA biosynthesis. Functionally, catalyzes the formation of N(7)-methylguanine at position 46 (m7G46) in tRNA. In Geobacillus sp. (strain WCH70), this protein is tRNA (guanine-N(7)-)-methyltransferase.